A 206-amino-acid polypeptide reads, in one-letter code: ATP-dependent Clp protease proteolytic subunit (206 aa).

The active-site Nucleophile is S110. H135 is an active-site residue.

Belongs to the peptidase S14 family. Fourteen ClpP subunits assemble into 2 heptameric rings which stack back to back to give a disk-like structure with a central cavity, resembling the structure of eukaryotic proteasomes.

It is found in the cytoplasm. The catalysed reaction is Hydrolysis of proteins to small peptides in the presence of ATP and magnesium. alpha-casein is the usual test substrate. In the absence of ATP, only oligopeptides shorter than five residues are hydrolyzed (such as succinyl-Leu-Tyr-|-NHMec, and Leu-Tyr-Leu-|-Tyr-Trp, in which cleavage of the -Tyr-|-Leu- and -Tyr-|-Trp bonds also occurs).. Functionally, cleaves peptides in various proteins in a process that requires ATP hydrolysis. Has a chymotrypsin-like activity. Plays a major role in the degradation of misfolded proteins. In Edwardsiella ictaluri (strain 93-146), this protein is ATP-dependent Clp protease proteolytic subunit.